A 239-amino-acid chain; its full sequence is Homeobox-leucine zipper protein HOX12 (239 aa).

The disordered stretch occupies residues 22 to 65 (PEAATSGGEQKKARQRRRRKVKPEAAAALAGESGGDEQAKKRRL). Residues 58-117 (EQAKKRRLSDEQARFLEMSFKKERKLETPRKVQLAAELGLDAKQVAVWFQNRRARHKSKL) constitute a DNA-binding region (homeobox). Residues 107–168 (QNRRARHKSK…KLAAVAAATT (62 aa)) adopt a coiled-coil conformation.

Belongs to the HD-ZIP homeobox family. Class I subfamily. Expressed in seedlings, roots, stems, leaf sheaths and panicles.

Its subcellular location is the nucleus. Its function is as follows. Probable transcription factor. This chain is Homeobox-leucine zipper protein HOX12 (HOX12), found in Oryza sativa subsp. indica (Rice).